Consider the following 241-residue polypeptide: Carboxy-S-adenosyl-L-methionine synthase (241 aa).

S-adenosyl-L-methionine-binding positions include Y38, 63–65, 88–89, 116–117, N131, and R198; these read GCS, DN, and DI.

Belongs to the class I-like SAM-binding methyltransferase superfamily. Cx-SAM synthase family. In terms of assembly, homodimer.

The catalysed reaction is prephenate + S-adenosyl-L-methionine = carboxy-S-adenosyl-L-methionine + 3-phenylpyruvate + H2O. Its function is as follows. Catalyzes the conversion of S-adenosyl-L-methionine (SAM) to carboxy-S-adenosyl-L-methionine (Cx-SAM). The protein is Carboxy-S-adenosyl-L-methionine synthase of Haemophilus influenzae (strain ATCC 51907 / DSM 11121 / KW20 / Rd).